Reading from the N-terminus, the 62-residue chain is MAKLQVTLTRSVIGRPETQRKTVEALGLKKTNSSVVLEDNVANRGQINKVSHLVTVEEVDAK.

The protein belongs to the universal ribosomal protein uL30 family. In terms of assembly, part of the 50S ribosomal subunit.

The polypeptide is Large ribosomal subunit protein uL30 (Staphylococcus carnosus (strain TM300)).